We begin with the raw amino-acid sequence, 320 residues long: N-acetylneuraminate lyase (320 aa).

Aceneuramate-binding residues include T51 and T52. Y143 acts as the Proton donor in catalysis. K173 (schiff-base intermediate with substrate) is an active-site residue. Residues S175, G199, D201, E202, and S218 each contribute to the aceneuramate site.

Belongs to the DapA family. NanA subfamily. In terms of assembly, homotetramer.

Its subcellular location is the cytoplasm. It carries out the reaction aceneuramate = aldehydo-N-acetyl-D-mannosamine + pyruvate. It functions in the pathway amino-sugar metabolism; N-acetylneuraminate degradation. Catalyzes the cleavage of N-acetylneuraminic acid (sialic acid) to form pyruvate and N-acetylmannosamine via a Schiff base intermediate. It prevents sialic acids from being recycled and returning to the cell surface. Involved in the N-glycolylneuraminic acid (Neu5Gc) degradation pathway. This chain is N-acetylneuraminate lyase, found in Rattus norvegicus (Rat).